A 95-amino-acid polypeptide reads, in one-letter code: Ubiquinol-cytochrome-c reductase complex assembly factor 3 (95 aa).

Residues 1-7 (MTTLRKL) lie on the Mitochondrial matrix side of the membrane. A helical transmembrane segment spans residues 8-28 (LLVGALLGAGAGVGTALFALV). A mediates lipid-binding region spans residues 23–80 (ALFALVTPGEERKQAMLKEMPEQYPQRRDEAARTKELLLATLQEAAATQENVAWRKNW). The Mitochondrial intermembrane segment spans residues 29-95 (TPGEERKQAM…GGGGGGGRSA (67 aa)).

The protein belongs to the UQCC3 family. As to quaternary structure, associates with the ubiquinol-cytochrome c reductase complex (mitochondrial respiratory chain complex III(CIII) or cytochrome b-c1 complex). Interacts with UQCC1. Forms a complex, named COMC, composed of UQCC1, UQCC2; UQCC3 and UQCC4; mediates MT-CYB hemylation and association with the first nuclear-encoded complex III subunit UQCRQ. Probably cleaved by OMA1 under mitochondrial stress conditions.

It is found in the mitochondrion inner membrane. Its function is as follows. Required for the assembly of the ubiquinol-cytochrome c reductase complex (mitochondrial respiratory chain complex III or cytochrome b-c1 complex), mediating cytochrome b recruitment and probably stabilization within the complex. Thereby, plays an important role in ATP production by mitochondria. Cardiolipin-binding protein, it may also control the cardiolipin composition of mitochondria membranes and their morphology. This is Ubiquinol-cytochrome-c reductase complex assembly factor 3 from Bos taurus (Bovine).